The sequence spans 89 residues: Small ribosomal subunit protein uS15 (89 aa).

It belongs to the universal ribosomal protein uS15 family. Part of the 30S ribosomal subunit. Forms a bridge to the 50S subunit in the 70S ribosome, contacting the 23S rRNA.

In terms of biological role, one of the primary rRNA binding proteins, it binds directly to 16S rRNA where it helps nucleate assembly of the platform of the 30S subunit by binding and bridging several RNA helices of the 16S rRNA. Functionally, forms an intersubunit bridge (bridge B4) with the 23S rRNA of the 50S subunit in the ribosome. The chain is Small ribosomal subunit protein uS15 from Leuconostoc mesenteroides subsp. mesenteroides (strain ATCC 8293 / DSM 20343 / BCRC 11652 / CCM 1803 / JCM 6124 / NCDO 523 / NBRC 100496 / NCIMB 8023 / NCTC 12954 / NRRL B-1118 / 37Y).